We begin with the raw amino-acid sequence, 385 residues long: Deoxyguanosinetriphosphate triphosphohydrolase-like protein (385 aa).

In terms of domain architecture, HD spans 75–197 (RLTHTLEVGQ…VDAADALAYT (123 aa)).

This sequence belongs to the dGTPase family. Type 2 subfamily.

This is Deoxyguanosinetriphosphate triphosphohydrolase-like protein from Deinococcus geothermalis (strain DSM 11300 / CIP 105573 / AG-3a).